Reading from the N-terminus, the 250-residue chain is Hydroxyacylglutathione hydrolase (250 aa).

Positions 53, 55, 57, 58, 110, 127, and 165 each coordinate Zn(2+).

It belongs to the metallo-beta-lactamase superfamily. Glyoxalase II family. Monomer. Zn(2+) serves as cofactor.

The catalysed reaction is an S-(2-hydroxyacyl)glutathione + H2O = a 2-hydroxy carboxylate + glutathione + H(+). Its pathway is secondary metabolite metabolism; methylglyoxal degradation; (R)-lactate from methylglyoxal: step 2/2. Its function is as follows. Thiolesterase that catalyzes the hydrolysis of S-D-lactoyl-glutathione to form glutathione and D-lactic acid. The chain is Hydroxyacylglutathione hydrolase from Photorhabdus laumondii subsp. laumondii (strain DSM 15139 / CIP 105565 / TT01) (Photorhabdus luminescens subsp. laumondii).